The chain runs to 687 residues: Translation initiation factor IF-2 (687 aa).

The tr-type G domain occupies 186–355; it reads KRPPIVTVMG…LLTAEMLELK (170 aa). The segment at 195–202 is G1; that stretch reads GHVDHGKT. Residue 195–202 coordinates GTP; sequence GHVDHGKT. The G2 stretch occupies residues 220-224; the sequence is GITQH. A G3 region spans residues 241–244; it reads DTPG. GTP contacts are provided by residues 241-245 and 295-298; these read DTPGH and NKID. A G4 region spans residues 295-298; the sequence is NKID. A G5 region spans residues 331-333; the sequence is SAK.

Belongs to the TRAFAC class translation factor GTPase superfamily. Classic translation factor GTPase family. IF-2 subfamily.

It localises to the cytoplasm. In terms of biological role, one of the essential components for the initiation of protein synthesis. Protects formylmethionyl-tRNA from spontaneous hydrolysis and promotes its binding to the 30S ribosomal subunits. Also involved in the hydrolysis of GTP during the formation of the 70S ribosomal complex. This is Translation initiation factor IF-2 from Clostridium botulinum (strain Alaska E43 / Type E3).